Reading from the N-terminus, the 96-residue chain is Co-chaperonin GroES (96 aa).

Belongs to the GroES chaperonin family. As to quaternary structure, heptamer of 7 subunits arranged in a ring. Interacts with the chaperonin GroEL.

It localises to the cytoplasm. Together with the chaperonin GroEL, plays an essential role in assisting protein folding. The GroEL-GroES system forms a nano-cage that allows encapsulation of the non-native substrate proteins and provides a physical environment optimized to promote and accelerate protein folding. GroES binds to the apical surface of the GroEL ring, thereby capping the opening of the GroEL channel. This Legionella jeonii protein is Co-chaperonin GroES.